A 174-amino-acid polypeptide reads, in one-letter code: RNA pyrophosphohydrolase (174 aa).

The region spanning 6–149 (GYRPNVGIVI…KRDVYRRALK (144 aa)) is the Nudix hydrolase domain. Residues 38 to 59 (GGIDEGETPEQAMYRELYEEVG) carry the Nudix box motif.

It belongs to the Nudix hydrolase family. RppH subfamily. A divalent metal cation serves as cofactor.

In terms of biological role, accelerates the degradation of transcripts by removing pyrophosphate from the 5'-end of triphosphorylated RNA, leading to a more labile monophosphorylated state that can stimulate subsequent ribonuclease cleavage. This Photobacterium profundum (strain SS9) protein is RNA pyrophosphohydrolase.